Reading from the N-terminus, the 379-residue chain is Origin of replication complex subunit 2 (379 aa).

Positions 1 to 25 are disordered; it reads MALRGGHAAAAAGVSSGSEDDDEEA. A compositionally biased stretch (low complexity) spans 8–17; sequence AAAAAGVSSG.

Belongs to the ORC2 family. Component of the origin recognition complex (ORC) composed of at least ORC1, ORC2, ORC3, ORC4, ORC5 and ORC6. ORC is regulated in a cell-cycle and development dependent manner. It is sequentially assembled at the exit from anaphase of mitosis and disassembled as cells enter S phase.

It localises to the nucleus. Functionally, essential protein. Component of the origin recognition complex (ORC) that binds origins of replication. DNA-binding is ATP-dependent, however specific DNA sequences that define origins of replication have not been identified so far. ORC is required to assemble the pre-replication complex necessary to initiate DNA replication. The polypeptide is Origin of replication complex subunit 2 (Oryza sativa subsp. indica (Rice)).